The primary structure comprises 91 residues: DNA-binding protein HU (91 aa).

The protein belongs to the bacterial histone-like protein family.

In terms of biological role, histone-like DNA-binding protein which is capable of wrapping DNA to stabilize it, and thus to prevent its denaturation under extreme environmental conditions. Also seems to act as a fortuitous virulence factor in delayed sequelae by binding to heparan sulfate-proteoglycans in the extracellular matrix of target organs and acting as a nidus for in situ immune complex formation. The protein is DNA-binding protein HU (hup) of Streptococcus mutans serotype c (strain ATCC 700610 / UA159).